The chain runs to 223 residues: Twisted gastrulation protein homolog 1 (223 aa).

A signal peptide spans 1–25 (MKLHYVAVLTLAILMFLTWLPESLS). Residues Asn-52 and Asn-81 are each glycosylated (N-linked (GlcNAc...) asparagine).

Belongs to the twisted gastrulation protein family. As to quaternary structure, interacts with CHRD and BMP4. This interaction enhances CHRD/BMP4 complex formation. Interacts with BMP7.

The protein resides in the secreted. Its function is as follows. May be involved in dorsoventral axis formation. Seems to antagonize BMP signaling by forming ternary complexes with CHRD and BMPs, thereby preventing BMPs from binding to their receptors. In addition to the anti-BMP function, also has pro-BMP activity, partly mediated by cleavage and degradation of CHRD, which releases BMPs from ternary complexes. May be an important modulator of BMP-regulated cartilage development and chondrocyte differentiation. May play a role in thymocyte development. The protein is Twisted gastrulation protein homolog 1 (TWSG1) of Homo sapiens (Human).